A 264-amino-acid polypeptide reads, in one-letter code: Small ribosomal subunit protein uS2 (264 aa).

Residues 228-264 (QLDAEDDYEDYDGSEYDDDYEETEYTDAVIPDEETEE) are disordered. A compositionally biased stretch (acidic residues) spans 230–264 (DAEDDYEDYDGSEYDDDYEETEYTDAVIPDEETEE).

This sequence belongs to the universal ribosomal protein uS2 family.

The polypeptide is Small ribosomal subunit protein uS2 (Nostoc punctiforme (strain ATCC 29133 / PCC 73102)).